The sequence spans 335 residues: GTPase Obg (335 aa).

The 158-residue stretch at 1–158 (MFLDQITIEL…RQVELELKLI (158 aa)) folds into the Obg domain. One can recognise an OBG-type G domain in the interval 159-334 (ADIGLVGFPN…LNSLFTNRLS (176 aa)). GTP contacts are provided by residues 165–172 (GFPNAGKS), 190–194 (FTTLQ), 215–218 (DIPG), 285–288 (NKID), and 315–317 (SGL). Mg(2+)-binding residues include Ser-172 and Thr-192.

This sequence belongs to the TRAFAC class OBG-HflX-like GTPase superfamily. OBG GTPase family. In terms of assembly, monomer. It depends on Mg(2+) as a cofactor.

The protein localises to the cytoplasm. In terms of biological role, an essential GTPase which binds GTP, GDP and possibly (p)ppGpp with moderate affinity, with high nucleotide exchange rates and a fairly low GTP hydrolysis rate. Plays a role in control of the cell cycle, stress response, ribosome biogenesis and in those bacteria that undergo differentiation, in morphogenesis control. The chain is GTPase Obg from Chlamydia caviae (strain ATCC VR-813 / DSM 19441 / 03DC25 / GPIC) (Chlamydophila caviae).